The chain runs to 513 residues: Glutamyl-tRNA(Gln) amidotransferase subunit A (513 aa).

Residues Lys85 and Ser160 each act as charge relay system in the active site. Residue Ser184 is the Acyl-ester intermediate of the active site.

It belongs to the amidase family. GatA subfamily. In terms of assembly, heterotrimer of A, B and C subunits.

It catalyses the reaction L-glutamyl-tRNA(Gln) + L-glutamine + ATP + H2O = L-glutaminyl-tRNA(Gln) + L-glutamate + ADP + phosphate + H(+). Allows the formation of correctly charged Gln-tRNA(Gln) through the transamidation of misacylated Glu-tRNA(Gln) in organisms which lack glutaminyl-tRNA synthetase. The reaction takes place in the presence of glutamine and ATP through an activated gamma-phospho-Glu-tRNA(Gln). In Bifidobacterium longum (strain NCC 2705), this protein is Glutamyl-tRNA(Gln) amidotransferase subunit A.